The primary structure comprises 417 residues: Queuine tRNA-ribosyltransferase accessory subunit 2 (417 aa).

Cysteine 324, cysteine 326, cysteine 329, and histidine 355 together coordinate Zn(2+).

It belongs to the queuine tRNA-ribosyltransferase family. QTRT2 subfamily. In terms of assembly, heterodimer of a catalytic subunit and an accessory subunit. Zn(2+) is required as a cofactor.

The protein localises to the cytoplasm. Non-catalytic subunit of the queuine tRNA-ribosyltransferase (TGT) that catalyzes the base-exchange of a guanine (G) residue with queuine (Q) at position 34 (anticodon wobble position) in tRNAs with GU(N) anticodons (tRNA-Asp, -Asn, -His and -Tyr), resulting in the hypermodified nucleoside queuosine (7-(((4,5-cis-dihydroxy-2-cyclopenten-1-yl)amino)methyl)-7-deazaguanosine). In Drosophila persimilis (Fruit fly), this protein is Queuine tRNA-ribosyltransferase accessory subunit 2.